Consider the following 563-residue polypeptide: Arginine--tRNA ligase (563 aa).

The 'HIGH' region signature appears at 137–147 (ANPTGLLHMGN).

It belongs to the class-I aminoacyl-tRNA synthetase family. As to quaternary structure, monomer.

It is found in the cytoplasm. It catalyses the reaction tRNA(Arg) + L-arginine + ATP = L-arginyl-tRNA(Arg) + AMP + diphosphate. The chain is Arginine--tRNA ligase from Desulforudis audaxviator (strain MP104C).